We begin with the raw amino-acid sequence, 296 residues long: Putative peptide transport system permease protein BRA1093/BS1330_II1085 (296 aa).

6 helical membrane passes run 35–55, 97–117, 131–151, 205–225, 229–249, and 260–280; these read IGLVLLLIVVLAAVLAPWITN, LWIGLTVAVLSAILGAIIGIA, VMDALMAFPAILLAIGISAAL, ILPNCLAPLLVTLTFVFAYAI, ATLSFLGIGTPPPHASWGSIV, and WWIMLFPGIAITISALAINLI. The 185-residue stretch at 97-281 folds into the ABC transmembrane type-1 domain; that stretch reads LWIGLTVAVL…ISALAINLIG (185 aa).

The protein belongs to the binding-protein-dependent transport system permease family. In terms of assembly, the complex is composed of two ATP-binding proteins (BRA1094), two transmembrane proteins (BRA1092 and BRA1093) and a solute-binding protein (BRA1090).

The protein resides in the cell inner membrane. Probably part of an ABC transporter complex that could be involved in peptide import. Probably responsible for the translocation of the substrate across the membrane. The chain is Putative peptide transport system permease protein BRA1093/BS1330_II1085 from Brucella suis biovar 1 (strain 1330).